The chain runs to 248 residues: Carbohydrate deacetylase 2 (248 aa).

Positions 59 and 123 each coordinate Mg(2+).

It belongs to the YdjC deacetylase family. As to quaternary structure, homodimer. Requires Mg(2+) as cofactor.

Probably catalyzes the deacetylation of acetylated carbohydrates an important step in the degradation of oligosaccharides. This is Carbohydrate deacetylase 2 from Listeria innocua serovar 6a (strain ATCC BAA-680 / CLIP 11262).